The following is a 274-amino-acid chain: AA9 family lytic polysaccharide monooxygenase A (274 aa).

The signal sequence occupies residues 1–22 (MHVPQFISTGALLALLARPAAA). Histidine 23 is a Cu(2+) binding site. A disulfide bridge links cysteine 63 with cysteine 194. Glycine 67, aspartate 98, and serine 100 together coordinate (1,4-beta-D-glucosyl)n. Residue histidine 101 participates in Cu(2+) binding. Histidine 174 is an O2 binding site. Residue aspartate 177 participates in (1,4-beta-D-glucosyl)n binding. Cu(2+) is bound at residue tyrosine 191.

The protein belongs to the polysaccharide monooxygenase AA9 family. Cu(2+) serves as cofactor.

It is found in the secreted. The catalysed reaction is [(1-&gt;4)-beta-D-glucosyl]n+m + reduced acceptor + O2 = 4-dehydro-beta-D-glucosyl-[(1-&gt;4)-beta-D-glucosyl]n-1 + [(1-&gt;4)-beta-D-glucosyl]m + acceptor + H2O.. Functionally, lytic polysaccharide monooxygenase (LPMO) that depolymerizes crystalline and amorphous polysaccharides via the oxidation of scissile alpha- or beta-(1-4)-glycosidic bonds, yielding C4 oxidation products. Catalysis by LPMOs requires the reduction of the active-site copper from Cu(II) to Cu(I) by a reducing agent and H(2)O(2) or O(2) as a cosubstrate. Cleaves a range of polysaccharides, including cellulose, xyloglucan, mixed-linkage glucan and glucomannan. This Collariella virescens (Soil fungus) protein is AA9 family lytic polysaccharide monooxygenase A.